The chain runs to 176 residues: Photosystem I assembly protein Ycf4 (176 aa).

The next 2 membrane-spanning stretches (helical) occupy residues F22–S42 and L48–I68.

It belongs to the Ycf4 family.

The protein localises to the plastid thylakoid membrane. Its function is as follows. Seems to be required for the assembly of the photosystem I complex. In Cuscuta gronovii (Common dodder), this protein is Photosystem I assembly protein Ycf4.